Reading from the N-terminus, the 365-residue chain is Alpha-keto acid-binding periplasmic protein TakP (365 aa).

A signal peptide (tat-type signal) is located at residues 1–26 (MDRRSFITKAAVGGAAASALAAPALA). Substrate contacts are provided by residues 99 to 100 (YY), Gln-156, and Arg-177. Gln-156 serves as a coordination point for Na(+). Positions 214, 215, and 240 each coordinate Na(+).

This sequence belongs to the bacterial solute-binding protein 7 family. Homodimer. The complex comprises the extracytoplasmic solute receptor protein TakP, and the two transmembrane proteins TakQ and TakM. Predicted to be exported by the Tat system. The position of the signal peptide cleavage has not been experimentally proven.

Its subcellular location is the periplasm. Functionally, part of the tripartite ATP-independent periplasmic (TRAP) transport system TakPQM involved in the uptake of alpha-keto acids. This protein specifically binds alpha-keto acids including pyruvate, oxobutyrate, oxovalerate and 4-methyl-2-oxovalerate. Ligand-binding affinity increases with the increasing chain length of the aliphatic backbone of the ligand. Is not able to bind alpha-ketoglutarate. This is Alpha-keto acid-binding periplasmic protein TakP from Cereibacter sphaeroides (strain ATCC 17023 / DSM 158 / JCM 6121 / CCUG 31486 / LMG 2827 / NBRC 12203 / NCIMB 8253 / ATH 2.4.1.) (Rhodobacter sphaeroides).